We begin with the raw amino-acid sequence, 96 residues long: Small ribosomal subunit protein bS6 (96 aa).

Belongs to the bacterial ribosomal protein bS6 family.

Functionally, binds together with bS18 to 16S ribosomal RNA. This is Small ribosomal subunit protein bS6 from Salinispora tropica (strain ATCC BAA-916 / DSM 44818 / JCM 13857 / NBRC 105044 / CNB-440).